The sequence spans 23 residues: Potassium channel toxin alpha-KTx 13.4 (23 aa).

Cystine bridges form between Cys-2–Cys-15, Cys-5–Cys-20, and Cys-9–Cys-22. Residues 13–20 (GKCINGKC) are interaction with Ca(2+)-activated K(+) channels. Tyr-23 is subject to Tyrosine amide.

In terms of tissue distribution, expressed by the venom gland.

The protein resides in the secreted. Blocks the potassium channel Shaker B. The sequence is that of Potassium channel toxin alpha-KTx 13.4 from Tityus stigmurus (Brazilian scorpion).